A 423-amino-acid chain; its full sequence is Serine hydroxymethyltransferase (423 aa).

(6S)-5,6,7,8-tetrahydrofolate is bound by residues leucine 118 and glycine 122–leucine 124. Lysine 227 is modified (N6-(pyridoxal phosphate)lysine). Serine 351–phenylalanine 353 is a binding site for (6S)-5,6,7,8-tetrahydrofolate.

This sequence belongs to the SHMT family. Homodimer. It depends on pyridoxal 5'-phosphate as a cofactor.

The protein resides in the cytoplasm. The enzyme catalyses (6R)-5,10-methylene-5,6,7,8-tetrahydrofolate + glycine + H2O = (6S)-5,6,7,8-tetrahydrofolate + L-serine. Its pathway is one-carbon metabolism; tetrahydrofolate interconversion. It functions in the pathway amino-acid biosynthesis; glycine biosynthesis; glycine from L-serine: step 1/1. Catalyzes the reversible interconversion of serine and glycine with tetrahydrofolate (THF) serving as the one-carbon carrier. This reaction serves as the major source of one-carbon groups required for the biosynthesis of purines, thymidylate, methionine, and other important biomolecules. Also exhibits THF-independent aldolase activity toward beta-hydroxyamino acids, producing glycine and aldehydes, via a retro-aldol mechanism. The protein is Serine hydroxymethyltransferase of Petrotoga mobilis (strain DSM 10674 / SJ95).